A 409-amino-acid polypeptide reads, in one-letter code: Putative protein disulfide-isomerase DDB_G0275025 (409 aa).

The N-terminal stretch at 1–21 (MKLINICIFIFAIICIESTFG) is a signal peptide. The 113-residue stretch at 28 to 140 (NVINLTKKNF…AKFSLAKLPS (113 aa)) folds into the Thioredoxin domain. A disulfide bridge connects residues Cys57 and Cys60. Residues 245 to 273 (SNNDNNNNNNNNNNEESTKTTTTEKDPAS) form a disordered region. Positions 247-259 (NDNNNNNNNNNNE) are enriched in low complexity. The span at 260–273 (ESTKTTTTEKDPAS) shows a compositional bias: basic and acidic residues. The short motif at 406–409 (KDEL) is the Prevents secretion from ER element.

The protein belongs to the protein disulfide isomerase family.

The protein resides in the endoplasmic reticulum lumen. It catalyses the reaction Catalyzes the rearrangement of -S-S- bonds in proteins.. The sequence is that of Putative protein disulfide-isomerase DDB_G0275025 from Dictyostelium discoideum (Social amoeba).